Consider the following 188-residue polypeptide: Protein GrpE (188 aa).

The segment covering 1-16 (MEERNEQVVEEVKEAQ) has biased composition (basic and acidic residues). Residues 1-31 (MEERNEQVVEEVKEAQVEEAVTPENSEETVE) form a disordered region.

The protein belongs to the GrpE family. In terms of assembly, homodimer.

It is found in the cytoplasm. Its function is as follows. Participates actively in the response to hyperosmotic and heat shock by preventing the aggregation of stress-denatured proteins, in association with DnaK and GrpE. It is the nucleotide exchange factor for DnaK and may function as a thermosensor. Unfolded proteins bind initially to DnaJ; upon interaction with the DnaJ-bound protein, DnaK hydrolyzes its bound ATP, resulting in the formation of a stable complex. GrpE releases ADP from DnaK; ATP binding to DnaK triggers the release of the substrate protein, thus completing the reaction cycle. Several rounds of ATP-dependent interactions between DnaJ, DnaK and GrpE are required for fully efficient folding. In Bacillus anthracis, this protein is Protein GrpE.